Here is a 323-residue protein sequence, read N- to C-terminus: Sphingolipid delta(4)-desaturase/C4-monooxygenase DES2 (323 aa).

Glycine 2 is lipidated: N-myristoyl glycine. 2 helical membrane passes run proline 41–valine 61 and tryptophan 68–isoleucine 88. A Histidine box-1 motif is present at residues histidine 89–histidine 93. Residues threonine 95–threonine 99 are required for C4-hydroxylase activity. The Histidine box-2 signature appears at histidine 128–histidine 132. The helical transmembrane segment at valine 210–alanine 231 threads the bilayer. The Histidine box-3 motif lies at histidine 259–histidine 263.

Belongs to the fatty acid desaturase type 1 family. DEGS subfamily. As to expression, highly expressed in intestinal crypt cells and adjacent epithelial cells (at protein level).

Its subcellular location is the endoplasmic reticulum membrane. The catalysed reaction is a dihydroceramide + 2 Fe(II)-[cytochrome b5] + O2 + 2 H(+) = a phytoceramide + 2 Fe(III)-[cytochrome b5] + H2O. It catalyses the reaction an N-acylsphinganine + 2 Fe(II)-[cytochrome b5] + O2 + 2 H(+) = an N-acylsphing-4-enine + 2 Fe(III)-[cytochrome b5] + 2 H2O. The enzyme catalyses an N-acylsphinganine + 2 Fe(II)-[cytochrome b5] + O2 + 2 H(+) = an N-acyl-(4R)-4-hydroxysphinganine + 2 Fe(III)-[cytochrome b5] + H2O. It carries out the reaction N-octanoylsphinganine + 2 Fe(II)-[cytochrome b5] + O2 + 2 H(+) = N-octanoyl-4-hydroxysphinganine + 2 Fe(III)-[cytochrome b5] + H2O. The protein operates within membrane lipid metabolism; sphingolipid biosynthesis. Bifunctional enzyme which acts both as a sphingolipid delta(4)-desaturase and a sphingolipid C4-monooxygenase. This chain is Sphingolipid delta(4)-desaturase/C4-monooxygenase DES2, found in Mus musculus (Mouse).